The chain runs to 523 residues: Siroheme synthase (523 aa).

Residues 1–203 (MNTFPLFFKL…GNENEAIAQL (203 aa)) form a precorrin-2 dehydrogenase /sirohydrochlorin ferrochelatase region. Residues 22–23 (DV) and 43–44 (PS) contribute to the NAD(+) site. Phosphoserine is present on Ser128. The interval 231-523 (GEVYIVGAGP…DGGLEQLVID (293 aa)) is uroporphyrinogen-III C-methyltransferase. Pro240 lines the S-adenosyl-L-methionine pocket. Asp263 serves as the catalytic Proton acceptor. Catalysis depends on Lys285, which acts as the Proton donor. S-adenosyl-L-methionine contacts are provided by residues 316 to 318 (GGD), Ile321, 346 to 347 (TA), Met398, and Ala427.

In the N-terminal section; belongs to the precorrin-2 dehydrogenase / sirohydrochlorin ferrochelatase family. It in the C-terminal section; belongs to the precorrin methyltransferase family.

The enzyme catalyses uroporphyrinogen III + 2 S-adenosyl-L-methionine = precorrin-2 + 2 S-adenosyl-L-homocysteine + H(+). The catalysed reaction is precorrin-2 + NAD(+) = sirohydrochlorin + NADH + 2 H(+). It catalyses the reaction siroheme + 2 H(+) = sirohydrochlorin + Fe(2+). Its pathway is cofactor biosynthesis; adenosylcobalamin biosynthesis; precorrin-2 from uroporphyrinogen III: step 1/1. It participates in cofactor biosynthesis; adenosylcobalamin biosynthesis; sirohydrochlorin from precorrin-2: step 1/1. It functions in the pathway porphyrin-containing compound metabolism; siroheme biosynthesis; precorrin-2 from uroporphyrinogen III: step 1/1. The protein operates within porphyrin-containing compound metabolism; siroheme biosynthesis; siroheme from sirohydrochlorin: step 1/1. Its pathway is porphyrin-containing compound metabolism; siroheme biosynthesis; sirohydrochlorin from precorrin-2: step 1/1. In terms of biological role, multifunctional enzyme that catalyzes the SAM-dependent methylations of uroporphyrinogen III at position C-2 and C-7 to form precorrin-2 via precorrin-1. Then it catalyzes the NAD-dependent ring dehydrogenation of precorrin-2 to yield sirohydrochlorin. Finally, it catalyzes the ferrochelation of sirohydrochlorin to yield siroheme. The sequence is that of Siroheme synthase from Psychrobacter cryohalolentis (strain ATCC BAA-1226 / DSM 17306 / VKM B-2378 / K5).